We begin with the raw amino-acid sequence, 554 residues long: Solute carrier family 22 member 22 (554 aa).

The Cytoplasmic segment spans residues 1–15 (MDFDEILHHVGDSGR). A helical transmembrane segment spans residues 16 to 36 (FQICMIILLNILSLVLSPHDV). Residues 37–144 (LENFTAAIPA…DLVCDFQSFK (108 aa)) are Extracellular-facing. Asparagine 39 is a glycosylation site (N-linked (GlcNAc...) asparagine). Residues 145–165 (YYAQATSLAGHLVSCPLSGII) form a helical membrane-spanning segment. Residues 166 to 172 (SDRFGRK) are Cytoplasmic-facing. The helical transmembrane segment at 173–193 (PLLMYCSLAYGAVGTYCAFAP) threads the bilayer. N-linked (GlcNAc...) asparagine glycosylation is present at asparagine 194. The Extracellular segment spans residues 194 to 199 (NFSVYC). The helical transmembrane segment at 200–220 (VLRFLLSAFQSTILINSLILV) threads the bilayer. The Cytoplasmic portion of the chain corresponds to 221–231 (LEEASVQWHPT). Residues 232–252 (IIVLSGLFNSIGQGVLGGLAY) traverse the membrane as a helical segment. At 253–258 (VISDWH) the chain is on the extracellular side. Residues 259-279 (LLQLAYALPFFIFFVLFCWVP) traverse the membrane as a helical segment. Topologically, residues 280–347 (ESVRWLIITG…DIFINPLIRK (68 aa)) are cytoplasmic. Residues 348–368 (IVLSNSSLLFAELFSFVGLLL) traverse the membrane as a helical segment. The Extracellular segment spans residues 369 to 376 (DVQLLGKN). A helical transmembrane segment spans residues 377–397 (MFLTQIFLGAIDVPSKSLTYF). Residues 398–405 (TIRNVSRR) lie on the Cytoplasmic side of the membrane. The helical transmembrane segment at 406-426 (PLIAFLLLTTGSCITITIFIS) threads the bilayer. Topologically, residues 427-434 (EEMYVLRT) are extracellular. Residues 435 to 455 (IIFILGKGCFAAFTCISTTYI) form a helical membrane-spanning segment. The Cytoplasmic segment spans residues 456–466 (NELSPVELRST). The helical transmembrane segment at 467–487 (LNGVFLAVVRLAGVLSALTLA) threads the bilayer. Over 488–491 (TRKY) the chain is Extracellular. A helical transmembrane segment spans residues 492–512 (FVYLPMILYGVLPIVATISIL). The Cytoplasmic segment spans residues 513–554 (FLPETFNLPHTDIIKDMEKRKRLMSKNISKKEGQDFLETTEC).

Belongs to the major facilitator (TC 2.A.1) superfamily. Organic cation transporter (TC 2.A.1.19) family. As to expression, specifically expressed in kidney where it is found in proximal convoluted tubules (at protein level). Colocalizes with the prostaglandin-inactivating enzyme HPGD in kidney (at protein level). Not detected in other tissues tested.

It localises to the basolateral cell membrane. Functionally, sodium-independent organic anion transporter which exhibits high specificity for a subset of prostaglandins including prostaglandin E2 (PGE2), prostaglandin E1 (PGE1), prostaglandin F2-alpha (PGF2-alpha) and prostaglandin D2 (PGD2). The protein is Solute carrier family 22 member 22 of Mus musculus (Mouse).